We begin with the raw amino-acid sequence, 478 residues long: ATP synthase subunit beta (478 aa).

Residue 164–171 coordinates ATP; the sequence is GGAGVGKT.

It belongs to the ATPase alpha/beta chains family. In terms of assembly, F-type ATPases have 2 components, CF(1) - the catalytic core - and CF(0) - the membrane proton channel. CF(1) has five subunits: alpha(3), beta(3), gamma(1), delta(1), epsilon(1). CF(0) has three main subunits: a(1), b(2) and c(9-12). The alpha and beta chains form an alternating ring which encloses part of the gamma chain. CF(1) is attached to CF(0) by a central stalk formed by the gamma and epsilon chains, while a peripheral stalk is formed by the delta and b chains.

Its subcellular location is the cell membrane. It carries out the reaction ATP + H2O + 4 H(+)(in) = ADP + phosphate + 5 H(+)(out). Functionally, produces ATP from ADP in the presence of a proton gradient across the membrane. The catalytic sites are hosted primarily by the beta subunits. This is ATP synthase subunit beta from Streptomyces coelicolor (strain ATCC BAA-471 / A3(2) / M145).